The primary structure comprises 461 residues: ATP synthase subunit beta 2 (461 aa).

151–158 (GGAGVGKT) contacts ATP.

Belongs to the ATPase alpha/beta chains family. In terms of assembly, F-type ATPases have 2 components, CF(1) - the catalytic core - and CF(0) - the membrane proton channel. CF(1) has five subunits: alpha(3), beta(3), gamma(1), delta(1), epsilon(1). CF(0) has three main subunits: a(1), b(2) and c(9-12). The alpha and beta chains form an alternating ring which encloses part of the gamma chain. CF(1) is attached to CF(0) by a central stalk formed by the gamma and epsilon chains, while a peripheral stalk is formed by the delta and b chains.

The protein localises to the cell inner membrane. It catalyses the reaction ATP + H2O + 4 H(+)(in) = ADP + phosphate + 5 H(+)(out). In terms of biological role, produces ATP from ADP in the presence of a proton gradient across the membrane. The catalytic sites are hosted primarily by the beta subunits. The protein is ATP synthase subunit beta 2 of Pseudoalteromonas atlantica (strain T6c / ATCC BAA-1087).